The following is a 1404-amino-acid chain: Microtubule organization protein AKNA (1404 aa).

Disordered stretches follow at residues 1 to 304 (MASS…VSPL) and 317 to 382 (QHKQ…RPLI). Serine 51 carries the post-translational modification Phosphoserine. The segment covering 70–91 (WDPDMQDSEESSGEETEADDAS) has biased composition (acidic residues). Over residues 185–203 (KSWSSGTVSLRQPSDSLGS) the composition is skewed to polar residues. Serine 302 is subject to Phosphoserine. Phosphoserine is present on residues serine 485 and serine 520. The interval 494 to 549 (AEWWPDPAQDPQASEATGWPFPRTDLSPSSSPGVATPGRLPQSQGIATDQPSTGQT) is disordered. The segment covering 534–549 (PQSQGIATDQPSTGQT) has biased composition (polar residues). Serine 617 is modified (phosphoserine). Residues 645 to 659 (MDQTQRETEPCRPDL) are compositionally biased toward basic and acidic residues. The interval 645–708 (MDQTQRETEP…TSPGSSCTLP (64 aa)) is disordered. 2 stretches are compositionally biased toward polar residues: residues 660–674 (QDST…QSAH) and 686–707 (DGQT…SCTL). Phosphoserine is present on residues serine 750 and serine 753. Positions 754-787 (LPEALRDEDEDDLEEEEEEQDHQGPLEVDSPATA) are PEST. 2 disordered regions span residues 755-1038 (PEAL…STAN) and 1085-1185 (HSTQ…RERV). Residues 759-773 (RDEDEDDLEEEEEEQ) show a composition bias toward acidic residues. The segment covering 803 to 813 (TQAEESHRDAT) has biased composition (basic and acidic residues). Phosphoserine occurs at positions 831 and 860. The segment at 885-906 (HTEEPWMVSPETDSGFVGSETS) is PEST. Composition is skewed to polar residues over residues 903 to 914 (SETSIVSPFTQT), 921 to 933 (HVST…QHLT), and 963 to 974 (SRTQQHFSSLSS). Serine 971 carries the post-translational modification Phosphoserine. The segment covering 1015–1029 (TSPDSAPAPTAASTP) has biased composition (low complexity). Residues 1085 to 1098 (HSTQTQEKLGSSPS) are compositionally biased toward polar residues. The segment at residues 1088 to 1096 (QTQEKLGSS) is a DNA-binding region (a.T hook). A phosphoserine mark is found at serine 1144 and serine 1145. Positions 1155-1167 (SSEKSRTFEEHPE) are enriched in basic and acidic residues. Position 1200 is a phosphoserine (serine 1200). Disordered regions lie at residues 1208-1235 (SGTP…TTRG) and 1253-1286 (SAEA…QTGS). The span at 1221-1235 (TQDTGSAVSRDTTRG) shows a compositional bias: polar residues. Phosphoserine is present on residues serine 1339, serine 1352, and serine 1389.

Belongs to the AKNA family. Interacts with DCTN1. Interacts with MAPRE1/EB1. Interacts with ODF2. Interacts with CAMSAP3. Post-translationally, phosphorylated; phosphorylation regulates dissociation from and reassembly at the centrosome. Expressed in neural stem cells isolated at the peak of subventricular zone (SVZ): localizes at the subdistal appendages of the mother centriole in specific subtypes of neural stem cells and in almost all basal progenitors.

It localises to the cytoplasm. It is found in the cytoskeleton. The protein localises to the microtubule organizing center. The protein resides in the centrosome. Its subcellular location is the centriole. It localises to the nucleus. Functionally, centrosomal protein that plays a key role in cell delamination by regulating microtubule organization. Required for the delamination and retention of neural stem cells from the subventricular zone during neurogenesis. Also regulates the epithelial-to-mesenchymal transition in other epithelial cells. Acts by increasing centrosomal microtubule nucleation and recruiting nucleation factors and minus-end stabilizers, thereby destabilizing microtubules at the adherens junctions and mediating constriction of the apical endfoot. In addition, may also act as a transcription factor that specifically activates the expression of the CD40 receptor and its ligand CD40L/CD154, two cell surface molecules on lymphocytes that are critical for antigen-dependent-B-cell development. Binds to A/T-rich promoters. It is unclear how it can both act as a microtubule organizer and as a transcription factor; additional evidences are required to reconcile these two apparently contradictory functions. This is Microtubule organization protein AKNA from Mus musculus (Mouse).